The primary structure comprises 288 residues: ATP synthase gamma chain (288 aa).

The protein belongs to the ATPase gamma chain family. As to quaternary structure, F-type ATPases have 2 components, CF(1) - the catalytic core - and CF(0) - the membrane proton channel. CF(1) has five subunits: alpha(3), beta(3), gamma(1), delta(1), epsilon(1). CF(0) has three main subunits: a, b and c.

The protein resides in the cell membrane. Functionally, produces ATP from ADP in the presence of a proton gradient across the membrane. The gamma chain is believed to be important in regulating ATPase activity and the flow of protons through the CF(0) complex. This is ATP synthase gamma chain from Staphylococcus aureus (strain Mu3 / ATCC 700698).